The primary structure comprises 202 residues: MEHLLSLLVRSVFIENMALAFFLGMCSFLAMSKKINAAIGLGIAVIVVQTVTVPANNLLLTYLLKEDALAWAGVTGVDLTFLSFISFIGVIAAIVQIMEMVMDKYMPALYNALGVFLPLITVNCVIMGGSLFMVERDYHFAESVVYGFGSGAGWAIAIVLLAGILEKMKYSDIPEGLRGLGITFITVGLMSLGFMSFGGISL.

The next 6 helical transmembrane spans lie at 11–31, 35–55, 81–101, 114–134, 144–164, and 180–200; these read SVFIENMALAFFLGMCSFLAM, INAAIGLGIAVIVVQTVTVPA, FLSFISFIGVIAAIVQIMEMV, GVFLPLITVNCVIMGGSLFMV, VVYGFGSGAGWAIAIVLLAGI, and LGITFITVGLMSLGFMSFGGI.

The protein belongs to the NqrDE/RnfAE family. Composed of six subunits; NqrA, NqrB, NqrC, NqrD, NqrE and NqrF.

The protein localises to the cell inner membrane. The enzyme catalyses a ubiquinone + n Na(+)(in) + NADH + H(+) = a ubiquinol + n Na(+)(out) + NAD(+). Its function is as follows. NQR complex catalyzes the reduction of ubiquinone-1 to ubiquinol by two successive reactions, coupled with the transport of Na(+) ions from the cytoplasm to the periplasm. NqrA to NqrE are probably involved in the second step, the conversion of ubisemiquinone to ubiquinol. In Cellvibrio japonicus (strain Ueda107) (Pseudomonas fluorescens subsp. cellulosa), this protein is Na(+)-translocating NADH-quinone reductase subunit E.